The primary structure comprises 1366 residues: Serine/threonine-protein kinase RUNKEL (1366 aa).

Residues 10–18 (IGHGKCSTV) and lysine 33 each bind ATP. Catalysis depends on aspartate 121, which acts as the Proton acceptor. Disordered stretches follow at residues 276-356 (TKPC…VNIL), 367-386 (QKENEKENYRRPLPNSNENC), 398-502 (LDFD…DSSK), and 524-549 (PSRKSDKEAVHSLSFETPQPSDFSKK). The segment covering 283-302 (RNGDRPNKTPPKYREKDRKG) has biased composition (basic and acidic residues). The span at 304–313 (SKQNENSIQG) shows a compositional bias: polar residues. Residues 367–376 (QKENEKENYR) show a composition bias toward basic and acidic residues. Positions 398 to 414 (LDFDENNDDEGPDESEG) are enriched in acidic residues. Basic and acidic residues predominate over residues 422 to 433 (QEERVMSHNENH). Residues 438–454 (VVSSNVPDENSSANETP) are compositionally biased toward polar residues. HEAT repeat units follow at residues 595–633 (LTNGPIMLVLVKVLRLSKTPAFRVQIASLIGLLIRHSTS), 638–675 (LANSGILDSLTNGLRDKHEKVRRFSMAALGELLFYIST), 699–737 (QVSNALISLVSSVLRKGEDDLTQVYALRTIENICSQGAY), 835–872 (TEEKNLFPSLLSIIEQGTEVLRGKALLFVAFLCKNSRR), 878–907 (FCNARFLPVVDRLAKEKDSYLQQCLEAFVN), 908–945 (VIASIIPGMLDTITNDIQQLMTGRRHGPVSPLNSRAPV), 946–986 (KTNA…LVEA), 992–1018 (DDFRVTLLQVLECITGDAPLVTQNGEI), 1019–1057 (IIREILPSLAAIYNGNKDGDARFLCLKIWFDSLTILLTE), 1072–1111 (ISNSHFLPLYPALIQDEDPIPAYAQKLLVMLVEFDYIKIS), 1279–1316 (TNLPKITPILDSWRRRKSTELHLLVLKRVLHCLGYACK), and 1329–1366 (GHDVSKINAIVSEMKNSDAAGLNSIASLVAMELQRLPR).

This sequence belongs to the protein kinase superfamily. Ser/Thr protein kinase family. As to quaternary structure, binds to microtubules (MT). As to expression, expressed in proliferating tissues of seedlings, lateral roots, young rosette leaves, siliques, flowers, embryos and stems (including apical meristem).

The protein localises to the cytoplasm. It is found in the cytoskeleton. It localises to the phragmoplast. The protein resides in the spindle. The catalysed reaction is L-seryl-[protein] + ATP = O-phospho-L-seryl-[protein] + ADP + H(+). It carries out the reaction L-threonyl-[protein] + ATP = O-phospho-L-threonyl-[protein] + ADP + H(+). Functionally, essential protein that regulates phragmoplast microtubule organization during cell plate expansion in cytokinesis during cell division, both somatic and syncytial. Required for endosperm cellularisation. In pollen development, involved in cellularisation during microsporogenesis by regulating radial microtubules (MT) organization in microspore mother cells. Seems to not have kinase activity. This chain is Serine/threonine-protein kinase RUNKEL, found in Arabidopsis thaliana (Mouse-ear cress).